We begin with the raw amino-acid sequence, 163 residues long: SsrA-binding protein (163 aa).

Belongs to the SmpB family.

The protein localises to the cytoplasm. In terms of biological role, required for rescue of stalled ribosomes mediated by trans-translation. Binds to transfer-messenger RNA (tmRNA), required for stable association of tmRNA with ribosomes. tmRNA and SmpB together mimic tRNA shape, replacing the anticodon stem-loop with SmpB. tmRNA is encoded by the ssrA gene; the 2 termini fold to resemble tRNA(Ala) and it encodes a 'tag peptide', a short internal open reading frame. During trans-translation Ala-aminoacylated tmRNA acts like a tRNA, entering the A-site of stalled ribosomes, displacing the stalled mRNA. The ribosome then switches to translate the ORF on the tmRNA; the nascent peptide is terminated with the 'tag peptide' encoded by the tmRNA and targeted for degradation. The ribosome is freed to recommence translation, which seems to be the essential function of trans-translation. In Corynebacterium diphtheriae (strain ATCC 700971 / NCTC 13129 / Biotype gravis), this protein is SsrA-binding protein.